A 218-amino-acid polypeptide reads, in one-letter code: N-(5'-phosphoribosyl)anthranilate isomerase (218 aa).

This sequence belongs to the TrpF family.

The enzyme catalyses N-(5-phospho-beta-D-ribosyl)anthranilate = 1-(2-carboxyphenylamino)-1-deoxy-D-ribulose 5-phosphate. Its pathway is amino-acid biosynthesis; L-tryptophan biosynthesis; L-tryptophan from chorismate: step 3/5. The protein is N-(5'-phosphoribosyl)anthranilate isomerase of Bordetella bronchiseptica (strain ATCC BAA-588 / NCTC 13252 / RB50) (Alcaligenes bronchisepticus).